The following is a 101-amino-acid chain: Small ribosomal subunit protein uS14 (101 aa).

This sequence belongs to the universal ribosomal protein uS14 family. In terms of assembly, part of the 30S ribosomal subunit. Contacts proteins S3 and S10.

Binds 16S rRNA, required for the assembly of 30S particles and may also be responsible for determining the conformation of the 16S rRNA at the A site. The protein is Small ribosomal subunit protein uS14 of Serratia proteamaculans (strain 568).